A 759-amino-acid chain; its full sequence is Spindle pole body component alp16 (759 aa).

As to quaternary structure, interacts with gamma-tubulin.

The protein localises to the cytoplasm. Its subcellular location is the cytoskeleton. It is found in the microtubule organizing center. The protein resides in the spindle pole body. In terms of biological role, component of the gamma tubule complex that is required for the regulation of both interphase microtubules and mitotic bipolar spindles. In Schizosaccharomyces pombe (strain 972 / ATCC 24843) (Fission yeast), this protein is Spindle pole body component alp16 (alp16).